A 63-amino-acid polypeptide reads, in one-letter code: MSRLLIFILTAVVLSVIIDILNNSKVEGQYCCYTCIPDCSKSCQDSGLRFKACIPYRSCLCQY.

The signal sequence occupies residues methionine 1–glycine 28. 3 disulfide bridges follow: cysteine 35-cysteine 53, cysteine 39-cysteine 59, and cysteine 43-cysteine 61.

It belongs to the short scorpion toxin superfamily. Potassium channel inhibitor family. In terms of tissue distribution, expressed by the venom gland.

The protein localises to the secreted. May block voltage-gated potassium channels (Kv). The chain is Potassium channel toxin MeuTXKalpha4 from Mesobuthus eupeus (Lesser Asian scorpion).